A 231-amino-acid chain; its full sequence is Putative N-acetylmannosamine-6-phosphate 2-epimerase (231 aa).

The protein belongs to the NanE family.

It catalyses the reaction an N-acyl-D-glucosamine 6-phosphate = an N-acyl-D-mannosamine 6-phosphate. It participates in amino-sugar metabolism; N-acetylneuraminate degradation; D-fructose 6-phosphate from N-acetylneuraminate: step 3/5. Converts N-acetylmannosamine-6-phosphate (ManNAc-6-P) to N-acetylglucosamine-6-phosphate (GlcNAc-6-P). This chain is Putative N-acetylmannosamine-6-phosphate 2-epimerase, found in Latilactobacillus sakei subsp. sakei (strain 23K) (Lactobacillus sakei subsp. sakei).